The chain runs to 453 residues: Insulinoma-associated protein 1b (453 aa).

Positions 1-20 (MPKGFLVKRNKKAALVSYRI) are SNAG domain. A disordered region spans residues 140-179 (NSNRSGTASGAHAPAIQTGAKRPSADAAERKVSSKSAKKP). The segment covering 162–171 (PSADAAERKV) has biased composition (basic and acidic residues). The segment at 252–274 (YRCPECEKVFSCPANLASHRRWH) adopts a C2H2-type 1 zinc-finger fold. The disordered stretch occupies residues 298–318 (AEFPSDRDTPSPGLSESGSED). C2H2-type zinc fingers lie at residues 321-343 (YDCQ…ILGH), 383-406 (LTCP…RLLH), and 412-435 (FPCK…NKCH).

Belongs to the INSM1 family.

It is found in the nucleus. In terms of biological role, may act as a transcriptional regulator. May play a role in neurogenesis and neuroendocrine cell differentiation during embryonic development. The sequence is that of Insulinoma-associated protein 1b (insm1b) from Danio rerio (Zebrafish).